Consider the following 282-residue polypeptide: MGQKVNPFGFRLGITTDHRSRWFADSTKTGQRYADYVKEDVAIRRLMSKGMERAGISKVEIERTRDRVRVDIHTARPGIVIGRRGAEADRIRTELEKLTGKQVQLNILEVKNPEVDAQLVAQGVAEQLASRVSFRRAMRKGMQTTMRSGAKGIRVQCAGRLGGAEMSRSEFYREGRVPLHTLRANIDYGFYEARTTFGRIGVKVWIYHGDITSRELAQSQAAAPRAPRRNERGDRPDRGARRTRPAQDTTAPVAEAVATGSAPTGTAATEPVIGKGSNGTEA.

The KH type-2 domain occupies 43–111; the sequence is IRRLMSKGME…QVQLNILEVK (69 aa). The segment at 217-282 is disordered; it reads AQSQAAAPRA…IGKGSNGTEA (66 aa). Positions 228-240 are enriched in basic and acidic residues; sequence RRNERGDRPDRGA. The span at 256-269 shows a compositional bias: low complexity; the sequence is AVATGSAPTGTAAT.

This sequence belongs to the universal ribosomal protein uS3 family. Part of the 30S ribosomal subunit. Forms a tight complex with proteins S10 and S14.

Binds the lower part of the 30S subunit head. Binds mRNA in the 70S ribosome, positioning it for translation. The chain is Small ribosomal subunit protein uS3 from Kineococcus radiotolerans (strain ATCC BAA-149 / DSM 14245 / SRS30216).